The chain runs to 222 residues: Charged multivesicular body protein 3 (222 aa).

The N-myristoyl glycine moiety is linked to residue Gly-2. The interval 2-113 (GLFGKTQEKP…LQKSTEVMKA (112 aa)) is intramolecular interaction with C-terminus. Positions 22 to 54 (KIRKEMRVVDRQIRDIQREEEKVKRSVKDAAKK) form a coiled coil. 2 important for autoinhibitory function regions span residues 59 to 64 (VCVVLA) and 168 to 169 (IL). Residues 149–222 (ESMDDQEEME…MQSRLATLRS (74 aa)) adopt a coiled-coil conformation. The intramolecular interaction with N-terminus stretch occupies residues 151–220 (MDDQEEMEEA…EAMQSRLATL (70 aa)). The interval 151 to 222 (MDDQEEMEEA…MQSRLATLRS (72 aa)) is interaction with VPS4A. Lys-179 is covalently cross-linked (Glycyl lysine isopeptide (Lys-Gly) (interchain with G-Cter in ubiquitin)). Residues 180–222 (APSKVTDALPEPEPSGAMAASDEEEEEEEALEAMQSRLATLRS) are disordered. 3 interaction with STAMBP regions span residues 196–222 (AMAA…TLRS), 203–207 (EEEEE), and 221–222 (RS). Phosphoserine is present on Ser-200. Acidic residues predominate over residues 200–210 (SDEEEEEEEAL). Positions 201 to 211 (DEEEEEEEALE) match the MIT-interacting motif motif.

This sequence belongs to the SNF7 family. Probable core component of the endosomal sorting required for transport complex III (ESCRT-III). ESCRT-III components are thought to multimerize to form a flat lattice on the perimeter membrane of the endosome. Several assembly forms of ESCRT-III may exist that interact and act sequentially. Forms a metastable monomer in solution; its core structure (without part of the putative autoinhibitory C-terminal acidic region) oligomerizes into a flat lattice via two different dimerization interfaces. In vitro, heteromerizes with CHMP2A (but not CHMP4) to form helical tubular structures that expose membrane-interacting sites on the outside whereas VPS4B can associate on the inside of the tubule. May interact with IGFBP7; the relevance of such interaction however remains unclear. Interacts with CHMP2A. Interacts with CHMP4A; the interaction requires the release of CHMP4A autoinhibition. Interacts with VPS4A. Interacts with STAMBP; the interaction appears to relieve the autoinhibition of CHMP3. Interacts with VTA1.

It is found in the cytoplasm. The protein localises to the cytosol. The protein resides in the membrane. It localises to the endosome. Its subcellular location is the late endosome membrane. In terms of biological role, probable core component of the endosomal sorting required for transport complex III (ESCRT-III) which is involved in multivesicular bodies (MVBs) formation and sorting of endosomal cargo proteins into MVBs. MVBs contain intraluminal vesicles (ILVs) that are generated by invagination and scission from the limiting membrane of the endosome and mostly are delivered to lysosomes enabling degradation of membrane proteins, such as stimulated growth factor receptors, lysosomal enzymes and lipids. The MVB pathway appears to require the sequential function of ESCRT-O, -I,-II and -III complexes. ESCRT-III proteins mostly dissociate from the invaginating membrane before the ILV is released. The ESCRT machinery also functions in topologically equivalent membrane fission events, such as the terminal stages of cytokinesis and the budding of enveloped viruses (lentiviruses). ESCRT-III proteins are believed to mediate the necessary vesicle extrusion and/or membrane fission activities, possibly in conjunction with the AAA ATPase VPS4. Selectively binds to phosphatidylinositol 3,5-bisphosphate PtdIns(3,5)P2 and PtdIns(3,4)P2 in preference to other phosphoinositides tested. Involved in late stages of cytokinesis. Plays a role in endosomal sorting/trafficking of EGF receptor. This chain is Charged multivesicular body protein 3 (CHMP3), found in Macaca fascicularis (Crab-eating macaque).